Reading from the N-terminus, the 370-residue chain is Anhydro-N-acetylmuramic acid kinase (370 aa).

13–20 (GTSMDGVD) contributes to the ATP binding site.

This sequence belongs to the anhydro-N-acetylmuramic acid kinase family.

It catalyses the reaction 1,6-anhydro-N-acetyl-beta-muramate + ATP + H2O = N-acetyl-D-muramate 6-phosphate + ADP + H(+). It functions in the pathway amino-sugar metabolism; 1,6-anhydro-N-acetylmuramate degradation. It participates in cell wall biogenesis; peptidoglycan recycling. Catalyzes the specific phosphorylation of 1,6-anhydro-N-acetylmuramic acid (anhMurNAc) with the simultaneous cleavage of the 1,6-anhydro ring, generating MurNAc-6-P. Is required for the utilization of anhMurNAc either imported from the medium or derived from its own cell wall murein, and thus plays a role in cell wall recycling. The chain is Anhydro-N-acetylmuramic acid kinase from Vibrio parahaemolyticus serotype O3:K6 (strain RIMD 2210633).